The following is a 294-amino-acid chain: MYQTTIKKSVELVGIGLHKGSAVKLRLEPLESNSGLIFYRSDVDVAIPLLPANVVDTKMATVIGKDGYVISTIEHMLSAIYAYGIDNLKIIVNADEVPVMDGSSASFCMLLDEAGVVQLDVPKKIMRIKKEIIVQEGEKYVKLSPSTDLKYGFTIKFPHPVIQQQEYVLNFTKQNYKDEIARARTFGFLHEVQYLRSKGLALGGSLENAIVLDDKKVLNPEGLRFDDEFVRHKILDAIGDMALIGMNFVGNYEALAGSHDLNHKLTLELLKDAENYEVIELVDEKTKELEKAYA.

His-75, His-232, and Asp-236 together coordinate Zn(2+). The active-site Proton donor is the His-259.

This sequence belongs to the LpxC family. The cofactor is Zn(2+).

It carries out the reaction a UDP-3-O-[(3R)-3-hydroxyacyl]-N-acetyl-alpha-D-glucosamine + H2O = a UDP-3-O-[(3R)-3-hydroxyacyl]-alpha-D-glucosamine + acetate. Its pathway is glycolipid biosynthesis; lipid IV(A) biosynthesis; lipid IV(A) from (3R)-3-hydroxytetradecanoyl-[acyl-carrier-protein] and UDP-N-acetyl-alpha-D-glucosamine: step 2/6. In terms of biological role, catalyzes the hydrolysis of UDP-3-O-myristoyl-N-acetylglucosamine to form UDP-3-O-myristoylglucosamine and acetate, the committed step in lipid A biosynthesis. The protein is UDP-3-O-acyl-N-acetylglucosamine deacetylase of Sulfurimonas denitrificans (strain ATCC 33889 / DSM 1251) (Thiomicrospira denitrificans (strain ATCC 33889 / DSM 1251)).